Here is a 262-residue protein sequence, read N- to C-terminus: Indole-3-glycerol phosphate synthase (262 aa).

It belongs to the TrpC family.

It catalyses the reaction 1-(2-carboxyphenylamino)-1-deoxy-D-ribulose 5-phosphate + H(+) = (1S,2R)-1-C-(indol-3-yl)glycerol 3-phosphate + CO2 + H2O. It functions in the pathway amino-acid biosynthesis; L-tryptophan biosynthesis; L-tryptophan from chorismate: step 4/5. This chain is Indole-3-glycerol phosphate synthase, found in Bordetella petrii (strain ATCC BAA-461 / DSM 12804 / CCUG 43448).